Consider the following 160-residue polypeptide: Large ribosomal subunit protein uL22c (160 aa).

This sequence belongs to the universal ribosomal protein uL22 family. As to quaternary structure, part of the 50S ribosomal subunit.

Its subcellular location is the plastid. The protein localises to the chloroplast. This protein binds specifically to 23S rRNA. Functionally, the globular domain of the protein is located near the polypeptide exit tunnel on the outside of the subunit, while an extended beta-hairpin is found that lines the wall of the exit tunnel in the center of the 70S ribosome. The chain is Large ribosomal subunit protein uL22c (rpl22) from Draba nemorosa (Woodland whitlowgrass).